The primary structure comprises 285 residues: 4-hydroxybenzoate octaprenyltransferase (285 aa).

7 helical membrane passes run 17–37, 41–61, 92–112, 135–155, 158–178, 216–236, and 263–283; these read PVGIFLLLWPTLWALWIAGAG, PKVLLVFVAGVALMRSAGCVI, LLLFAGLCLVAFGLVLLLNPL, HWPQAYLGAAFGWAVPMAFAA, GTVPIAAWLLFIATVLWATVY, ALLLLLFWIGYREGLGFYYYL, and AFLNNNAFGAVIFGGIALHYL.

Belongs to the UbiA prenyltransferase family. The cofactor is Mg(2+).

It is found in the cell inner membrane. It catalyses the reaction all-trans-octaprenyl diphosphate + 4-hydroxybenzoate = 4-hydroxy-3-(all-trans-octaprenyl)benzoate + diphosphate. The protein operates within cofactor biosynthesis; ubiquinone biosynthesis. Its function is as follows. Catalyzes the prenylation of para-hydroxybenzoate (PHB) with an all-trans polyprenyl group. Mediates the second step in the final reaction sequence of ubiquinone-8 (UQ-8) biosynthesis, which is the condensation of the polyisoprenoid side chain with PHB, generating the first membrane-bound Q intermediate 3-octaprenyl-4-hydroxybenzoate. The protein is 4-hydroxybenzoate octaprenyltransferase of Nitrosococcus oceani (strain ATCC 19707 / BCRC 17464 / JCM 30415 / NCIMB 11848 / C-107).